The sequence spans 432 residues: Enolase (432 aa).

Glutamine 167 lines the (2R)-2-phosphoglycerate pocket. Glutamate 209 (proton donor) is an active-site residue. The Mg(2+) site is built by aspartate 246, glutamate 290, and aspartate 317. Residues lysine 342, arginine 371, serine 372, and lysine 393 each contribute to the (2R)-2-phosphoglycerate site. Catalysis depends on lysine 342, which acts as the Proton acceptor.

This sequence belongs to the enolase family. As to quaternary structure, component of the RNA degradosome, a multiprotein complex involved in RNA processing and mRNA degradation. Mg(2+) serves as cofactor.

Its subcellular location is the cytoplasm. It is found in the secreted. The protein localises to the cell surface. It carries out the reaction (2R)-2-phosphoglycerate = phosphoenolpyruvate + H2O. The protein operates within carbohydrate degradation; glycolysis; pyruvate from D-glyceraldehyde 3-phosphate: step 4/5. Catalyzes the reversible conversion of 2-phosphoglycerate (2-PG) into phosphoenolpyruvate (PEP). It is essential for the degradation of carbohydrates via glycolysis. This is Enolase from Salmonella agona (strain SL483).